The following is a 204-amino-acid chain: Guanylate kinase (204 aa).

The Guanylate kinase-like domain maps to 6–184; it reads GLLIVLSGPA…AVDRIKAIVT (179 aa). ATP is bound at residue 13 to 20; that stretch reads GPAGVGKG.

This sequence belongs to the guanylate kinase family.

Its subcellular location is the cytoplasm. The catalysed reaction is GMP + ATP = GDP + ADP. Functionally, essential for recycling GMP and indirectly, cGMP. This Halalkalibacterium halodurans (strain ATCC BAA-125 / DSM 18197 / FERM 7344 / JCM 9153 / C-125) (Bacillus halodurans) protein is Guanylate kinase (gmk).